The primary structure comprises 176 residues: Ribosome maturation factor RimM (176 aa).

One can recognise a PRC barrel domain in the interval 97 to 176 (EDEFYWRDLI…QILVDWDPDF (80 aa)).

It belongs to the RimM family. In terms of assembly, binds ribosomal protein uS19.

The protein resides in the cytoplasm. Functionally, an accessory protein needed during the final step in the assembly of 30S ribosomal subunit, possibly for assembly of the head region. Essential for efficient processing of 16S rRNA. May be needed both before and after RbfA during the maturation of 16S rRNA. It has affinity for free ribosomal 30S subunits but not for 70S ribosomes. The polypeptide is Ribosome maturation factor RimM (Shewanella oneidensis (strain ATCC 700550 / JCM 31522 / CIP 106686 / LMG 19005 / NCIMB 14063 / MR-1)).